We begin with the raw amino-acid sequence, 39 residues long: Photosystem II reaction center protein Y (39 aa).

Residues 5–23 traverse the membrane as a helical segment; it reads VLVVVGPLLIAASWAVFNI.

This sequence belongs to the PsbY family. In terms of assembly, PSII is composed of 1 copy each of membrane proteins PsbA, PsbB, PsbC, PsbD, PsbE, PsbF, PsbH, PsbI, PsbJ, PsbK, PsbL, PsbM, PsbT, PsbX, PsbY, PsbZ, Psb30/Ycf12, peripheral proteins PsbO, CyanoQ (PsbQ), PsbU, PsbV and a large number of cofactors. It forms dimeric complexes.

The protein localises to the cellular thylakoid membrane. In terms of biological role, loosely associated component of the core of photosystem II (PSII), it is not always seen in crystals. PSII is a light-driven water plastoquinone oxidoreductase, using light energy to abstract electrons from H(2)O, generating a proton gradient subsequently used for ATP formation. The chain is Photosystem II reaction center protein Y from Rippkaea orientalis (strain PCC 8801 / RF-1) (Cyanothece sp. (strain PCC 8801)).